Reading from the N-terminus, the 317-residue chain is Pantothenate kinase (317 aa).

An ATP-binding site is contributed by 95 to 102; sequence GSVAVGKS.

It belongs to the prokaryotic pantothenate kinase family.

It is found in the cytoplasm. It catalyses the reaction (R)-pantothenate + ATP = (R)-4'-phosphopantothenate + ADP + H(+). It participates in cofactor biosynthesis; coenzyme A biosynthesis; CoA from (R)-pantothenate: step 1/5. The polypeptide is Pantothenate kinase (Rhodopseudomonas palustris (strain BisB18)).